Consider the following 273-residue polypeptide: MTDSYQMEDIKNSNETSISLQNVTISYGDSDAVRNVYFDIPKYKVTSLIGPSGCGKSTVLRSLNRMNDLISSCTLKGLILFEGLDLYSDQIDPVEVRRKIGMVFQQPNPFPKSIYENIAFGARINGFSGNLDELVEDSLRKAAVWDECKDKLNESGYSLSGGQQQRLCIARTIAIKPDVILMDEPCSALDPISTIKIEETIHELKKNFTIVIVTHNMQQALRVSDKTAFFNAAEKGGTDDGKVGYLVEFDKTKKIFNSPKEKATQDYISGKFG.

The 240-residue stretch at Ile-18–Asn-257 folds into the ABC transporter domain. An ATP-binding site is contributed by Gly-50 to Ser-57.

It belongs to the ABC transporter superfamily. Phosphate importer (TC 3.A.1.7) family. In terms of assembly, the complex is composed of two ATP-binding proteins (PstB), two transmembrane proteins (PstC and PstA) and a solute-binding protein (PstS).

The protein localises to the cell inner membrane. The catalysed reaction is phosphate(out) + ATP + H2O = ADP + 2 phosphate(in) + H(+). Functionally, part of the ABC transporter complex PstSACB involved in phosphate import. Responsible for energy coupling to the transport system. In Prochlorococcus marinus (strain SARG / CCMP1375 / SS120), this protein is Phosphate import ATP-binding protein PstB.